The following is a 490-amino-acid chain: ATP synthase subunit alpha 1 (490 aa).

Residue 171–178 (GDNGLGKS) coordinates ATP.

The protein belongs to the ATPase alpha/beta chains family. F-type ATPases have 2 components, CF(1) - the catalytic core - and CF(0) - the membrane proton channel. CF(1) has five subunits: alpha(3), beta(3), gamma(1), delta(1), epsilon(1). CF(0) has three main subunits: a(1), b(2) and c(9-12). The alpha and beta chains form an alternating ring which encloses part of the gamma chain. CF(1) is attached to CF(0) by a central stalk formed by the gamma and epsilon chains, while a peripheral stalk is formed by the delta and b chains.

It localises to the cell inner membrane. It catalyses the reaction ATP + H2O + 4 H(+)(in) = ADP + phosphate + 5 H(+)(out). Produces ATP from ADP in the presence of a proton gradient across the membrane. The alpha chain is a regulatory subunit. This Legionella pneumophila (strain Corby) protein is ATP synthase subunit alpha 1.